The sequence spans 273 residues: Protein FAM210A (273 aa).

The disordered stretch occupies residues 94-116 (RVLSSSSTSQETPSEKKEETDPL). The segment covering 106 to 116 (PSEKKEETDPL) has biased composition (basic and acidic residues). The region spanning 118 to 230 (DKSISLYQRF…GYMSTPPPVK (113 aa)) is the DUF1279 domain. Residues 138 to 158 (LIPVHLITSGIWFGTFYYATI) form a helical membrane-spanning segment. The stretch at 233-269 (LQGRMEETKELITEKMEETKDRLTEKLQETKGKVSFK) forms a coiled coil.

It belongs to the FAM210 family. In terms of assembly, interacts with ATAD3A. As to expression, expressed in skeletal muscle, heart, brain but not in bone.

The protein resides in the membrane. It localises to the mitochondrion. The protein localises to the cytoplasm. In terms of biological role, may play a role in the structure and strength of both muscle and bone. The polypeptide is Protein FAM210A (Fam210a) (Mus musculus (Mouse)).